Here is a 505-residue protein sequence, read N- to C-terminus: Maturase K (505 aa).

It belongs to the intron maturase 2 family. MatK subfamily.

It localises to the plastid. It is found in the chloroplast. Its function is as follows. Usually encoded in the trnK tRNA gene intron. Probably assists in splicing its own and other chloroplast group II introns. This chain is Maturase K, found in Rosa stellata (Star rose).